The following is a 488-amino-acid chain: Bifunctional NAD(P)H-hydrate repair enzyme Nnr (488 aa).

Residues 1 to 214 form an NAD(P)H-hydrate epimerase region; that stretch reads MTVLYQNRQI…LSESFFRAVF (214 aa). The YjeF N-terminal domain maps to 10–211; that stretch reads IRELERLAVE…RLGLSESFFR (202 aa). The interval 57-61 is NADPHX 1; for epimerase activity; that stretch reads NNGGD. Positions 58 and 121 each coordinate K(+). The tract at residues 125-131 is NADPHX 1; for epimerase activity; that stretch reads GSGLSGE. Tyrosine 136 and aspartate 154 together coordinate (6S)-NADPHX. Serine 157 is a K(+) binding site. Residues 221–488 enclose the YjeF C-terminal domain; it reads EWKGVFPLLP…FPHLRVLVNP (268 aa). The segment at 221 to 488 is ADP-dependent (S)-NAD(P)H-hydrate dehydratase; that stretch reads EWKGVFPLLP…FPHLRVLVNP (268 aa). Glycine 317 is a (6S)-NADPHX binding site. The tract at residues 363-369 is NADPHX 2; for dehydratase activity; it reads HPGEASR. ADP is bound by residues 400–404 and 420–429; these read KGVGT and NPGMATGGMG. Aspartate 430 provides a ligand contact to (6S)-NADPHX.

In the N-terminal section; belongs to the NnrE/AIBP family. This sequence in the C-terminal section; belongs to the NnrD/CARKD family. Requires K(+) as cofactor.

The catalysed reaction is (6S)-NADHX + ADP = AMP + phosphate + NADH + H(+). It carries out the reaction (6S)-NADPHX + ADP = AMP + phosphate + NADPH + H(+). It catalyses the reaction (6R)-NADHX = (6S)-NADHX. The enzyme catalyses (6R)-NADPHX = (6S)-NADPHX. Its function is as follows. Bifunctional enzyme that catalyzes the epimerization of the S- and R-forms of NAD(P)HX and the dehydration of the S-form of NAD(P)HX at the expense of ADP, which is converted to AMP. This allows the repair of both epimers of NAD(P)HX, a damaged form of NAD(P)H that is a result of enzymatic or heat-dependent hydration. The protein is Bifunctional NAD(P)H-hydrate repair enzyme Nnr (nnr) of Coxiella burnetii (strain RSA 493 / Nine Mile phase I).